The primary structure comprises 176 residues: MSEQKQEFENENAENSEHLQDENLQNIEDVEQNKLQKDYDELKDKYMRANAEFENIKKRMEKEKLSAMAYANESFAKDLLDVLDALEAAINVECHDEISLKIKEGVQNTLDLFLKKLEKYGVTLIKEEKEFDPNLHEAMFHVDGENHQSGEVVTVLQKGYKIADRVIRPTKVSVAK.

The disordered stretch occupies residues 1-31 (MSEQKQEFENENAENSEHLQDENLQNIEDVE).

It belongs to the GrpE family. Homodimer.

The protein resides in the cytoplasm. Participates actively in the response to hyperosmotic and heat shock by preventing the aggregation of stress-denatured proteins, in association with DnaK and GrpE. It is the nucleotide exchange factor for DnaK and may function as a thermosensor. Unfolded proteins bind initially to DnaJ; upon interaction with the DnaJ-bound protein, DnaK hydrolyzes its bound ATP, resulting in the formation of a stable complex. GrpE releases ADP from DnaK; ATP binding to DnaK triggers the release of the substrate protein, thus completing the reaction cycle. Several rounds of ATP-dependent interactions between DnaJ, DnaK and GrpE are required for fully efficient folding. This Campylobacter jejuni subsp. doylei (strain ATCC BAA-1458 / RM4099 / 269.97) protein is Protein GrpE.